The chain runs to 248 residues: Probable transcriptional regulatory protein Psyr_1407 (248 aa).

The protein belongs to the TACO1 family.

The protein localises to the cytoplasm. This Pseudomonas syringae pv. syringae (strain B728a) protein is Probable transcriptional regulatory protein Psyr_1407.